We begin with the raw amino-acid sequence, 279 residues long: Phycobilisome 34.5 kDa linker polypeptide, phycoerythrocyanin-associated, rod (279 aa).

One can recognise a PBS-linker domain in the interval 2–178 (STSVAERLAI…LYRGRANSDN (177 aa)). The 53-residue stretch at 226–278 (ARMFIVEAIAGTLNTNVAVRRSRQVYTVPYDRLSATYQEIHKRGGKIVKITPA) folds into the CpcD-like domain.

This sequence belongs to the phycobilisome linker protein family.

It is found in the cellular thylakoid membrane. Its function is as follows. Rod linker protein, associated with phycoerythrocyanin. Linker polypeptides determine the state of aggregation and the location of the disk-shaped phycobiliprotein units within the phycobilisome and modulate their spectroscopic properties in order to mediate a directed and optimal energy transfer. The polypeptide is Phycobilisome 34.5 kDa linker polypeptide, phycoerythrocyanin-associated, rod (pecC) (Mastigocladus laminosus (Fischerella sp.)).